A 248-amino-acid chain; its full sequence is UPF0736 protein BCG9842_B4111 (248 aa).

This sequence belongs to the UPF0736 family.

The protein is UPF0736 protein BCG9842_B4111 of Bacillus cereus (strain G9842).